A 314-amino-acid polypeptide reads, in one-letter code: DNA-directed RNA polymerase subunit alpha (314 aa).

Residues 1 to 228 (MIEIEKPKIE…EHLNIFVGLT (228 aa)) form an alpha N-terminal domain (alpha-NTD) region. Positions 246 to 314 (EKVLEMTIEE…ELGLGLRKDD (69 aa)) are alpha C-terminal domain (alpha-CTD).

It belongs to the RNA polymerase alpha chain family. Homodimer. The RNAP catalytic core consists of 2 alpha, 1 beta, 1 beta' and 1 omega subunit. When a sigma factor is associated with the core the holoenzyme is formed, which can initiate transcription.

The catalysed reaction is RNA(n) + a ribonucleoside 5'-triphosphate = RNA(n+1) + diphosphate. DNA-dependent RNA polymerase catalyzes the transcription of DNA into RNA using the four ribonucleoside triphosphates as substrates. The sequence is that of DNA-directed RNA polymerase subunit alpha from Bacillus cytotoxicus (strain DSM 22905 / CIP 110041 / 391-98 / NVH 391-98).